A 260-amino-acid polypeptide reads, in one-letter code: Proteasome subunit alpha (260 aa).

This sequence belongs to the peptidase T1A family. As to quaternary structure, the 20S proteasome core is composed of 14 alpha and 14 beta subunits that assemble into four stacked heptameric rings, resulting in a barrel-shaped structure. The two inner rings, each composed of seven catalytic beta subunits, are sandwiched by two outer rings, each composed of seven alpha subunits. The catalytic chamber with the active sites is on the inside of the barrel. Has a gated structure, the ends of the cylinder being occluded by the N-termini of the alpha-subunits. Is capped at one or both ends by the proteasome regulatory ATPase, PAN.

Its subcellular location is the cytoplasm. With respect to regulation, the formation of the proteasomal ATPase PAN-20S proteasome complex, via the docking of the C-termini of PAN into the intersubunit pockets in the alpha-rings, triggers opening of the gate for substrate entry. Interconversion between the open-gate and close-gate conformations leads to a dynamic regulation of the 20S proteasome proteolysis activity. In terms of biological role, component of the proteasome core, a large protease complex with broad specificity involved in protein degradation. This Thermococcus sp. (strain JCM 11816 / KS-1) protein is Proteasome subunit alpha.